The sequence spans 253 residues: Vitamin B12 import ATP-binding protein BtuD (253 aa).

The region spanning Leu-4–Asp-236 is the ABC transporter domain. Gly-32–Ser-39 is a binding site for ATP.

It belongs to the ABC transporter superfamily. Vitamin B12 importer (TC 3.A.1.13.1) family. The complex is composed of two ATP-binding proteins (BtuD), two transmembrane proteins (BtuC) and a solute-binding protein (BtuF).

The protein localises to the cell inner membrane. The catalysed reaction is an R-cob(III)alamin(out) + ATP + H2O = an R-cob(III)alamin(in) + ADP + phosphate + H(+). Functionally, part of the ABC transporter complex BtuCDF involved in vitamin B12 import. Responsible for energy coupling to the transport system. This Yersinia pestis protein is Vitamin B12 import ATP-binding protein BtuD.